The primary structure comprises 143 residues: uncharacterized protein (143 aa).

The tract at residues 1 to 21 (MAAMDTGQRADPSNPGDKEGD) is disordered.

This is an uncharacterized protein from Homo sapiens (Human).